A 328-amino-acid chain; its full sequence is MSSQVRVAVTQAEPVWLDLDATVKKTCDLIVEAAANGAQLVAFPECWIPGYPAWIWTRPVDMRLSSTYIQNSLKIDSPQMASIQKCAAENKIVVVLGFSENLHNSLYISQAIIGSDGKILTTRKKIKPTHMERTIFGDSFGDCLQSVVDTSAGRVGALSCWEHIQPLLKYHTYAQREQIHVAAWPPLFPHNEDGSLFSMSSEGTSSIARTYAIESQSFVLHTTTVIGQSGVDRMATHGGALMSTPGGGCSAIFGPDGRQLSQPIPSTEEGIIYADLDLDQIYHSKAFVDVCGHYSRPDLLWLGVEGSVKRHVRENAATVAAEAEQQEQ.

One can recognise a CN hydrolase domain in the interval 5–278 (VRVAVTQAEP…EGIIYADLDL (274 aa)). Catalysis depends on E45, which acts as the Proton acceptor. K125 is a catalytic residue. C160 (nucleophile) is an active-site residue.

The protein belongs to the carbon-nitrogen hydrolase superfamily. Nitrilase family.

It catalyses the reaction a nitrile + 2 H2O = a carboxylate + NH4(+). The enzyme catalyses 4-chlorophenylacetonitrile + 2 H2O = 4-chlorophenylacetate + NH4(+). Its function is as follows. Nitrilase that hydrolyzes preferentially phenylacetonitrile and (R,S)-mandelonitrile. Also acts on dinitriles like phenylenediacetonitriles (PDAs) 1,2-PDA, 1,3-PDA, and 1,4-PDA, and cyanophenyl acetonitriles (CPAs) 2-CPA and 4-CPA. The sequence is that of Arylacetonitrilase (nit2) from Aspergillus kawachii (strain NBRC 4308) (White koji mold).